Here is a 92-residue protein sequence, read N- to C-terminus: Defensin alpha 4 (92 aa).

A signal peptide spans 1–19 (MKTLVLLSALVLLAFQVQA). Positions 20–58 (DPIQNTDEETKTEEQPGEEDQAVSISFGGQEGSALHEKS) are excised as a propeptide. Residues 23–42 (QNTDEETKTEEQPGEEDQAV) are disordered. 3 disulfide bridges follow: Cys64–Cys89, Cys66–Cys81, and Cys71–Cys88.

The protein belongs to the alpha-defensin family. As to expression, paneth cells of the small bowel.

The protein localises to the secreted. The protein resides in the cytoplasmic vesicle. Its subcellular location is the secretory vesicle. Host-defense peptide that has antimicrobial activity. Exhibits activity against Gram-negative E.coli (in vitro). Probably contributes to the antimicrobial barrier function of the small bowel mucosa. This chain is Defensin alpha 4, found in Mus musculus (Mouse).